The chain runs to 328 residues: Tetraacyldisaccharide 4'-kinase (328 aa).

55–62 provides a ligand contact to ATP; it reads TAGGNGKT.

It belongs to the LpxK family.

The enzyme catalyses a lipid A disaccharide + ATP = a lipid IVA + ADP + H(+). The protein operates within glycolipid biosynthesis; lipid IV(A) biosynthesis; lipid IV(A) from (3R)-3-hydroxytetradecanoyl-[acyl-carrier-protein] and UDP-N-acetyl-alpha-D-glucosamine: step 6/6. Its function is as follows. Transfers the gamma-phosphate of ATP to the 4'-position of a tetraacyldisaccharide 1-phosphate intermediate (termed DS-1-P) to form tetraacyldisaccharide 1,4'-bis-phosphate (lipid IVA). The sequence is that of Tetraacyldisaccharide 4'-kinase from Escherichia coli O139:H28 (strain E24377A / ETEC).